Here is a 213-residue protein sequence, read N- to C-terminus: Urease accessory protein UreG (213 aa).

Gly17–Thr24 contributes to the GTP binding site.

This sequence belongs to the SIMIBI class G3E GTPase family. UreG subfamily. In terms of assembly, homodimer. UreD, UreF and UreG form a complex that acts as a GTP-hydrolysis-dependent molecular chaperone, activating the urease apoprotein by helping to assemble the nickel containing metallocenter of UreC. The UreE protein probably delivers the nickel.

It localises to the cytoplasm. Its function is as follows. Facilitates the functional incorporation of the urease nickel metallocenter. This process requires GTP hydrolysis, probably effectuated by UreG. This chain is Urease accessory protein UreG, found in Delftia acidovorans (strain DSM 14801 / SPH-1).